The chain runs to 310 residues: Nodulation protein D 2 (310 aa).

Positions 6–63 constitute an HTH lysR-type domain; it reads LDLNLLVALDALMTERKLTAAARRVKLSQPAMSAAIARLRTYFGDELFSMQGRELIPT. The H-T-H motif DNA-binding region spans 23 to 42; that stretch reads LTAAARRVKLSQPAMSAAIA.

The protein belongs to the LysR transcriptional regulatory family.

NodD regulates the expression of the nodABCFE genes which encode other nodulation proteins. NodD is also a negative regulator of its own expression. Binds flavonoids as inducers. The polypeptide is Nodulation protein D 2 (nodD2) (Rhizobium meliloti (strain 1021) (Ensifer meliloti)).